Reading from the N-terminus, the 154-residue chain is Putative NADPH-dependent 7-cyano-7-deazaguanine reductase (154 aa).

Aspartate 52 functions as the Proton donor in the catalytic mechanism. Substrate is bound by residues 67–69 (VES) and 86–87 (HE).

Belongs to the GTP cyclohydrolase I family. QueF type 1 subfamily.

It is found in the cytoplasm. It catalyses the reaction 7-aminomethyl-7-carbaguanine + 2 NADP(+) = 7-cyano-7-deazaguanine + 2 NADPH + 3 H(+). It participates in tRNA modification; tRNA-queuosine biosynthesis. In terms of biological role, catalyzes the NADPH-dependent reduction of 7-cyano-7-deazaguanine (preQ0) to 7-aminomethyl-7-deazaguanine (preQ1). The chain is Putative NADPH-dependent 7-cyano-7-deazaguanine reductase from Streptococcus pneumoniae (strain ATCC BAA-255 / R6).